The sequence spans 220 residues: Cell division protein SepF (220 aa).

A disordered region spans residues 1–120 (MAIKDAFNKM…RREQYQHAAH (120 aa)). Residues 26–35 (LSSKKQEEPV) show a composition bias toward basic and acidic residues. Positions 39–79 (QQTSRPNQQQQAARASQPQQPKQARPQMQAQQRPQSQSRAA) are enriched in low complexity. Residues 93-102 (VSHDYNDRRA) are compositionally biased toward basic and acidic residues.

Belongs to the SepF family. As to quaternary structure, homodimer. Interacts with FtsZ.

The protein localises to the cytoplasm. In terms of biological role, cell division protein that is part of the divisome complex and is recruited early to the Z-ring. Probably stimulates Z-ring formation, perhaps through the cross-linking of FtsZ protofilaments. Its function overlaps with FtsA. The sequence is that of Cell division protein SepF from Streptococcus equi subsp. equi (strain 4047).